Reading from the N-terminus, the 1185-residue chain is MFLKKLELKGFKSFAKPITINFESPITAIVGPNGSGKSNIVDAIRWVLGEQSAKTLRGSRMADVIFAGSKDYKALNKASVTLYLDNQDKILPLDVSTVKISRKVNMDGQSDYYLNGKICRLKDIENLLMDTGLGKDTYSIVGQGKIDSIINSRPEKLRELFEEAAGISKYKSRKMDAEKRLEKTNHDLQRIEDLIWELEKQVGPLEKAAQKAKKYRRLKEELKVLEVNLLLDKWDKNLDRLSSFEEDEQLLIHKLKSLTNNLTESQEKLESLQRTLKVKKDELSRLRDRYYRQKSKREEAENTLCILEERRQGLSREKENLNQEIKDLNLRREELTGRLDEIGSRLIELKEKIDNYNQNYESKKVLLDEIKENLDREKQDLFFLRNNILDGNVELKDISSQFEQLKERGRHLEEEIKRIKTTRDKISSEYDALNEREDKLRTYLKSVDNKIEEKRSVLTDLKEEELNLQARLEEAKKRFNRTRNKLNEKNSHLSILHEMEDSLEGYYRGVKNILKARSKLTGIIGVVADQIEVDKKYELAIETALGGRLQNIIVKDDKSARECVDYLKETKGGQATFLPVNMVNGRKVNFKNNQVKKVDGFLGIASSFVDCEDYLKPVIEYLLGRTIISTDLKSAIEIARLRKRGFKIVTLEGDVINSGGAITGGSKNSNKKMLLSRSRKIEDLKKEVLKLQNSLGEDSKNLNQLENKLKEVLNKKEVIKNDIRDLEIEKNNYHKDLIRLEQEKTKLSERLEEIDEEFVDCHDRLGKNDAAKQKLEDKLKALNDDFSLEKNEIENKEKRVEELEARHENINDEITRLKINLAQLNEKRESLRKEEEKSNKELIELAEKNEEFKERYNKILSEIKGINNKEGQLNELKVKLSGEIEKLKNDLNLTEKEVEEKQQRIDMLQREVSDLQTRLDKKKDEKHQIELKITRLENRNERIVEILENDYDVKPEDGFDDRIKITNYSRAGQKVKELKNAIKKLGTVNQGAIEEYNDLVDRLDYLQNQHDDLLKAKESITKVIQEIEETMSSLFHEAFLKVNGEFNNTFKELFNGGQASLKLTEPENLLETGVEIVAQPPGKQLKKLSLMSGGERALTAIALVFAFLKVNPSPFYILDEIDAPLDDANVTRFARYIKEYSRFAQFLIVTHRKNMMAEAETIYGVTMEESGVSKLISLKLSEQII.

An ATP-binding site is contributed by 32–39; sequence PNGSGKSN. Residues 167-494 adopt a coiled-coil conformation; that stretch reads ISKYKSRKMD…KLNEKNSHLS (328 aa). The SMC hinge domain occupies 521–639; that stretch reads TGIIGVVADQ…TDLKSAIEIA (119 aa). Residues 677-1031 are a coiled coil; the sequence is RSRKIEDLKK…KVIQEIEETM (355 aa).

Belongs to the SMC family. As to quaternary structure, homodimer.

It localises to the cytoplasm. Required for chromosome condensation and partitioning. The polypeptide is Chromosome partition protein Smc (Halothermothrix orenii (strain H 168 / OCM 544 / DSM 9562)).